Here is a 584-residue protein sequence, read N- to C-terminus: Alkaline nuclease (584 aa).

The disordered stretch occupies residues 409–430; sequence GGGADHHLRGSPGDSPPPIPFE.

The protein belongs to the herpesviridae alkaline nuclease family. In terms of assembly, interacts with major DNA-binding protein; this interaction increases the nuclease processivity of the alkaline exonuclease.

It localises to the host nucleus. The protein localises to the host cytoplasm. Plays a role in processing non linear or branched viral DNA intermediates in order to promote the production of mature packaged unit-length linear progeny viral DNA molecules. Exhibits endonuclease and exonuclease activities and accepts both double-stranded and single-stranded DNA as substrate. Exonuclease digestion of DNA is in the 5'-&gt; 3' direction and the products are 5'-monophosphate nucleosides. Additionally, forms a recombinase with the major DNA-binding protein, which displays strand exchange activity. The chain is Alkaline nuclease (UL98) from Human cytomegalovirus (strain AD169) (HHV-5).